We begin with the raw amino-acid sequence, 141 residues long: Cholinesterase (141 aa).

N39 carries an N-linked (GlcNAc...) asparagine glycan. 49-50 serves as a coordination point for substrate; sequence GG. S131 acts as the Acyl-ester intermediate in catalysis. S131 carries the post-translational modification Phosphoserine.

The protein belongs to the type-B carboxylesterase/lipase family. As to quaternary structure, homotetramer; disulfide-linked. Dimer of dimers. Present in most cells except erythrocytes.

The protein localises to the secreted. It catalyses the reaction an acylcholine + H2O = a carboxylate + choline + H(+). Functionally, esterase with broad substrate specificity. Contributes to the inactivation of the neurotransmitter acetylcholine. Can degrade neurotoxic organophosphate esters. This chain is Cholinesterase (BCHE), found in Macaca mulatta (Rhesus macaque).